The primary structure comprises 194 residues: A-type ATP synthase subunit E (194 aa).

The tract at residues 35–56 is disordered; the sequence is DAEADADQIREEREAEVERTIE. Residues 41–56 show a composition bias toward basic and acidic residues; it reads DQIREEREAEVERTIE.

The protein belongs to the V-ATPase E subunit family. Has multiple subunits with at least A(3), B(3), C, D, E, F, H, I and proteolipid K(x).

It localises to the cell membrane. In terms of biological role, component of the A-type ATP synthase that produces ATP from ADP in the presence of a proton gradient across the membrane. The chain is A-type ATP synthase subunit E from Haloarcula marismortui (strain ATCC 43049 / DSM 3752 / JCM 8966 / VKM B-1809) (Halobacterium marismortui).